The chain runs to 225 residues: Protein E26 (225 aa).

In terms of assembly, interacts with proteins IE0 and IE1. Interacts with protein FP25K. Interacts with host importin alpha-16. Post-translationally, palmitoylated.

The protein resides in the host nucleus inner membrane. It is found in the virion. Its subcellular location is the host cytoplasm. The protein localises to the host nucleus. Its function is as follows. Plays a role in the sorting of ODV envelope proteins to the host inner nuclear membrane. May facilitate the fusion and release of nucleocapsids into the cytoplasm. Modulates the expression levels of IE0 and IE1. The sequence is that of Protein E26 (DA26) from Lepidoptera (butterflies and moths).